A 39-amino-acid polypeptide reads, in one-letter code: Protein disulfide-isomerase A3 (39 aa).

Belongs to the protein disulfide isomerase family. Part of the major histocompatibility complex class I (MHC I) peptide loading complex composed of TAP1, TAP2, B2M, MHC heavy chain, TAPBP, PDIA3, and CALR. Interacts with ERP27 and CANX. Interacts with SERPINA2 and with SERPINA1. Interacts with ATP2A2. Post-translationally, within the major histocompatibility complex class I (MHC I) peptide loading complex forms reversible disulfide-linked heterodimers with TAPBP as part of its protein folding chaperone activity. This is essential to assist the dynamic assembly of the MHC I complex with high affinity antigens in the endoplasmic reticulum. Phosphorylated. As to expression, predominantly expressed in liver. Low in brain, testis and colon. Not detectable in pancreas and skeletal muscle.

Its subcellular location is the endoplasmic reticulum. The protein localises to the endoplasmic reticulum lumen. It localises to the melanosome. It carries out the reaction Catalyzes the rearrangement of -S-S- bonds in proteins.. Protein disulfide isomerase that catalyzes the formation, isomerization, and reduction or oxidation of disulfide bonds in client proteins and functions as a protein folding chaperone. Core component of the major histocompatibility complex class I (MHC I) peptide loading complex where it functions as an essential folding chaperone for TAPBP. Through TAPBP, assists the dynamic assembly of the MHC I complex with high affinity antigens in the endoplasmic reticulum. Therefore, plays a crucial role in the presentation of antigens to cytotoxic T cells in adaptive immunity. The sequence is that of Protein disulfide-isomerase A3 (PDIA3) from Papio hamadryas (Hamadryas baboon).